The following is a 115-amino-acid chain: Large ribosomal subunit protein bL20c (115 aa).

This sequence belongs to the bacterial ribosomal protein bL20 family.

The protein localises to the plastid. The protein resides in the chloroplast. Functionally, binds directly to 23S ribosomal RNA and is necessary for the in vitro assembly process of the 50S ribosomal subunit. It is not involved in the protein synthesizing functions of that subunit. The polypeptide is Large ribosomal subunit protein bL20c (Emiliania huxleyi (Coccolithophore)).